A 1428-amino-acid chain; its full sequence is DNA polymerase III PolC-type (1428 aa).

In terms of domain architecture, Exonuclease spans 414–570; sequence FVVFDVETTG…YDAEATGYLL (157 aa).

This sequence belongs to the DNA polymerase type-C family. PolC subfamily.

It localises to the cytoplasm. The catalysed reaction is DNA(n) + a 2'-deoxyribonucleoside 5'-triphosphate = DNA(n+1) + diphosphate. Required for replicative DNA synthesis. This DNA polymerase also exhibits 3' to 5' exonuclease activity. The chain is DNA polymerase III PolC-type from Oceanobacillus iheyensis (strain DSM 14371 / CIP 107618 / JCM 11309 / KCTC 3954 / HTE831).